The sequence spans 219 residues: Ras-related protein Rab-3B (219 aa).

Ala2 carries the post-translational modification N-acetylalanine. Ser31, Ser32, Val33, Gly34, Lys35, Thr36, Ser37, Pro49, and Ser53 together coordinate GTP. Thr36 is a binding site for Mg(2+). The short motif at 45–58 (DTFTPAFVSTVGID) is the Switch 1 element. Mg(2+) contacts are provided by Thr54 and Asp77. Positions 78–96 (TAGQERYRTITTAYYRGAM) match the Switch 2 motif. Gly80 contacts GTP. At Thr86 the chain carries Phosphothreonine. Residues Asn135, Lys136, Asp138, Ala166, and Lys167 each coordinate GTP. Ser188 bears the Phosphoserine mark. S-geranylgeranyl cysteine attachment occurs at residues Cys217 and Cys219. The residue at position 219 (Cys219) is a Cysteine methyl ester.

It belongs to the small GTPase superfamily. Rab family. In terms of assembly, interacts with RIMS1, RIMS2, RPH3A and RPH3AL. The GTP-bound form interacts with GAS8/DRC4 (via coiled-coil domains). Interacts with GDI2, CHM and CHML; phosphorylation at Thr-86 disrupts these interactions. Interacts with MADD (via uDENN domain); the GTP-bound form is preferred for interaction. Mg(2+) serves as cofactor. Post-translationally, phosphorylation of Thr-86 in the switch II region by LRRK2 prevents the association of RAB regulatory proteins, including CHM, CHML and RAB GDP dissociation inhibitor GDI2.

The protein resides in the cell membrane. It is found in the golgi apparatus. The enzyme catalyses GTP + H2O = GDP + phosphate + H(+). With respect to regulation, regulated by guanine nucleotide exchange factors (GEFs) which promote the exchange of bound GDP for free GTP. Regulated by GTPase activating proteins (GAPs) which increase the GTP hydrolysis activity. Inhibited by GDP dissociation inhibitors (GDIs) which prevent Rab-GDP dissociation. Its function is as follows. The small GTPases Rab are key regulators of intracellular membrane trafficking, from the formation of transport vesicles to their fusion with membranes. Rabs cycle between an inactive GDP-bound form and an active GTP-bound form that is able to recruit to membranes different sets of downstream effectors directly responsible for vesicle formation, movement, tethering and fusion. The sequence is that of Ras-related protein Rab-3B (RAB3B) from Bos taurus (Bovine).